The chain runs to 434 residues: Adenylosuccinate synthetase (434 aa).

Residues 13–19 and 41–43 contribute to the GTP site; these read GDEGKGK and GHT. Asp14 (proton acceptor) is an active-site residue. Mg(2+) is bound by residues Asp14 and Gly41. Residues 14–17, 39–42, Thr133, Arg147, Gln228, Thr243, and Arg307 contribute to the IMP site; these read DEGK and NAGH. Catalysis depends on His42, which acts as the Proton donor. A substrate-binding site is contributed by 303-309; the sequence is STTGRKR. GTP contacts are provided by residues Arg309, 335–337, and 417–419; these read KID and STG.

Belongs to the adenylosuccinate synthetase family. Homodimer. Mg(2+) serves as cofactor.

The protein localises to the cytoplasm. It carries out the reaction IMP + L-aspartate + GTP = N(6)-(1,2-dicarboxyethyl)-AMP + GDP + phosphate + 2 H(+). The protein operates within purine metabolism; AMP biosynthesis via de novo pathway; AMP from IMP: step 1/2. Functionally, plays an important role in the de novo pathway of purine nucleotide biosynthesis. Catalyzes the first committed step in the biosynthesis of AMP from IMP. The polypeptide is Adenylosuccinate synthetase (Wigglesworthia glossinidia brevipalpis).